We begin with the raw amino-acid sequence, 388 residues long: Phosphopentomutase (388 aa).

The Mn(2+) site is built by aspartate 10, aspartate 282, histidine 287, aspartate 323, histidine 324, and histidine 335.

The protein belongs to the phosphopentomutase family. The cofactor is Mn(2+).

The protein resides in the cytoplasm. The catalysed reaction is 2-deoxy-alpha-D-ribose 1-phosphate = 2-deoxy-D-ribose 5-phosphate. It catalyses the reaction alpha-D-ribose 1-phosphate = D-ribose 5-phosphate. It functions in the pathway carbohydrate degradation; 2-deoxy-D-ribose 1-phosphate degradation; D-glyceraldehyde 3-phosphate and acetaldehyde from 2-deoxy-alpha-D-ribose 1-phosphate: step 1/2. Isomerase that catalyzes the conversion of deoxy-ribose 1-phosphate (dRib-1-P) and ribose 1-phosphate (Rib-1-P) to deoxy-ribose 5-phosphate (dRib-5-P) and ribose 5-phosphate (Rib-5-P), respectively. The polypeptide is Phosphopentomutase (Desulfitobacterium hafniense (strain DSM 10664 / DCB-2)).